The primary structure comprises 434 residues: Meiosis-specific kinetochore protein (434 aa).

2 disordered regions span residues M1–T102 and V249–K289. Basic and acidic residues predominate over residues K46–S62. The segment covering L64–S76 has biased composition (polar residues). A POLO box domain (PBD)-binding motif is present at residues S334–P336. The interval E391–C394 is required for localization to kinetochores. Residues Q404–L424 form a disordered region.

As to quaternary structure, interacts with CENPC. Interacts with PLK1; required for recruitment of PLK1 at kinetochores. As to expression, germ cell-specific. Expressed in both testis and ovary. Not expressed in other tissues.

The protein localises to the chromosome. The protein resides in the centromere. It localises to the kinetochore. Key regulator of kinetochore function during meiosis I: required both for mono-orientation of kinetochores on sister chromosomes and protection of centromeric cohesin from separase-mediated cleavage. Acts by facilitating kinetochore mono-orientation during meiosis I, when kinetochores on sister chromosomes face the same direction and are thus captured and pulled by spindle fibers from the same pole. Also required to prevent cleavage of cohesin at centromeres during meiosis I, possibly by acting as a regulator of the shugoshin-dependent protection pathway. Acts in collaboration with PLK1: required for PLK1 enrichment to kinetochores. Not required during meiosis II or mitosis. This chain is Meiosis-specific kinetochore protein, found in Mus musculus (Mouse).